A 92-amino-acid polypeptide reads, in one-letter code: MTTTQEKTRCTISGRVQGVCFRAATQEQAVRLGVTGYARNLRDGRVEVLACGPPEAVAQLREWLHEGPPAATVESVACEPADDPAPAEFSVG.

In terms of domain architecture, Acylphosphatase-like spans 7–92 (KTRCTISGRV…DPAPAEFSVG (86 aa)). Catalysis depends on residues R22 and N40.

It belongs to the acylphosphatase family.

It carries out the reaction an acyl phosphate + H2O = a carboxylate + phosphate + H(+). This chain is Acylphosphatase (acyP), found in Halorhodospira halophila (strain DSM 244 / SL1) (Ectothiorhodospira halophila (strain DSM 244 / SL1)).